Consider the following 141-residue polypeptide: Nucleoside triphosphatase NudI (141 aa).

In terms of domain architecture, Nudix hydrolase spans 1–141; that stretch reads MRQRTIVCPL…RHTLRLKGLL (141 aa). A Nudix box motif is present at residues 38–59; it reads GGVEPGERIEEALRREIREELG.

This sequence belongs to the Nudix hydrolase family. NudI subfamily. As to quaternary structure, monomer. Requires Mg(2+) as cofactor.

The catalysed reaction is a ribonucleoside 5'-triphosphate + H2O = a ribonucleoside 5'-phosphate + diphosphate + H(+). The enzyme catalyses a 2'-deoxyribonucleoside 5'-triphosphate + H2O = a 2'-deoxyribonucleoside 5'-phosphate + diphosphate + H(+). It carries out the reaction dUTP + H2O = dUMP + diphosphate + H(+). It catalyses the reaction dTTP + H2O = dTMP + diphosphate + H(+). The catalysed reaction is dCTP + H2O = dCMP + diphosphate + H(+). Functionally, catalyzes the hydrolysis of nucleoside triphosphates, with a preference for pyrimidine deoxynucleoside triphosphates (dUTP, dTTP and dCTP). This is Nucleoside triphosphatase NudI from Salmonella arizonae (strain ATCC BAA-731 / CDC346-86 / RSK2980).